Here is a 318-residue protein sequence, read N- to C-terminus: Pantothenate kinase (318 aa).

ATP is bound at residue 96–103 (GSVAVGKS).

The protein belongs to the prokaryotic pantothenate kinase family.

Its subcellular location is the cytoplasm. The catalysed reaction is (R)-pantothenate + ATP = (R)-4'-phosphopantothenate + ADP + H(+). Its pathway is cofactor biosynthesis; coenzyme A biosynthesis; CoA from (R)-pantothenate: step 1/5. This chain is Pantothenate kinase, found in Rhodopseudomonas palustris (strain ATCC BAA-98 / CGA009).